The following is a 556-amino-acid chain: Formate--tetrahydrofolate ligase (556 aa).

Threonine 65–threonine 72 serves as a coordination point for ATP.

Belongs to the formate--tetrahydrofolate ligase family.

The catalysed reaction is (6S)-5,6,7,8-tetrahydrofolate + formate + ATP = (6R)-10-formyltetrahydrofolate + ADP + phosphate. The protein operates within one-carbon metabolism; tetrahydrofolate interconversion. The protein is Formate--tetrahydrofolate ligase of Heliobacterium modesticaldum (strain ATCC 51547 / Ice1).